The primary structure comprises 393 residues: Phosphoenolpyruvate/phosphate translocator 3, chloroplastic (393 aa).

A chloroplast-targeting transit peptide spans 1–65 (MQRAAAASRA…LSGGRAVTAR (65 aa)). 7 helical membrane-spanning segments follow: residues 89-109 (LAET…NIYF), 124-144 (YTIT…MWAL), 164-183 (AAGH…KVAV), 195-217 (FFTV…LGSL), 232-249 (LSFN…NLLY), 270-290 (INLF…LMLF), and 362-382 (TPIS…VFLY). One can recognise an EamA domain in the interval 123 to 228 (PYTITAFQLA…PIVGGVALAS (106 aa)).

The protein belongs to the TPT transporter family. PPT (TC 2.A.7.9) subfamily.

It is found in the plastid. Its subcellular location is the chloroplast membrane. In terms of biological role, phosphoenolpyruvate/phosphate translocator that transports phosphoenolpyruvate (PEP) and dihydroxyacetone phosphate. In Oryza sativa subsp. japonica (Rice), this protein is Phosphoenolpyruvate/phosphate translocator 3, chloroplastic (PPT3).